A 173-amino-acid polypeptide reads, in one-letter code: ATP synthase subunit b (173 aa).

The chain crosses the membrane as a helical span at residues 20–40 (IIATLAIFLVLMFLLKKVAWG).

Belongs to the ATPase B chain family. As to quaternary structure, F-type ATPases have 2 components, F(1) - the catalytic core - and F(0) - the membrane proton channel. F(1) has five subunits: alpha(3), beta(3), gamma(1), delta(1), epsilon(1). F(0) has three main subunits: a(1), b(2) and c(10-14). The alpha and beta chains form an alternating ring which encloses part of the gamma chain. F(1) is attached to F(0) by a central stalk formed by the gamma and epsilon chains, while a peripheral stalk is formed by the delta and b chains.

It localises to the cell membrane. F(1)F(0) ATP synthase produces ATP from ADP in the presence of a proton or sodium gradient. F-type ATPases consist of two structural domains, F(1) containing the extramembraneous catalytic core and F(0) containing the membrane proton channel, linked together by a central stalk and a peripheral stalk. During catalysis, ATP synthesis in the catalytic domain of F(1) is coupled via a rotary mechanism of the central stalk subunits to proton translocation. Functionally, component of the F(0) channel, it forms part of the peripheral stalk, linking F(1) to F(0). In Lysinibacillus sphaericus (strain C3-41), this protein is ATP synthase subunit b.